The following is a 327-amino-acid chain: Zinc transport protein ZntB (327 aa).

Residues 1–273 (MEAIKGSDVN…ARRTYTMSLM (273 aa)) lie on the Cytoplasmic side of the membrane. Residues 274–294 (AMVFLPSTFLTGLFGVNLGGI) traverse the membrane as a helical segment. Over 295 to 300 (PGGGWQ) the chain is Periplasmic. Residues 301–321 (FGFSIFCILLVVLIGGVALWL) form a helical membrane-spanning segment. The Cytoplasmic portion of the chain corresponds to 322-327 (HRSKWL).

Belongs to the CorA metal ion transporter (MIT) (TC 1.A.35) family.

The protein resides in the cell inner membrane. It catalyses the reaction Zn(2+)(out) + H(+)(out) = Zn(2+)(in) + H(+)(in). In terms of biological role, zinc transporter. Acts as a Zn(2+):proton symporter, which likely mediates zinc ion uptake. The sequence is that of Zinc transport protein ZntB from Escherichia coli O6:K15:H31 (strain 536 / UPEC).